Consider the following 137-residue polypeptide: Dormancy-associated protein homolog 3 (137 aa).

Disordered regions lie at residues 1-55 (MGLL…DSLP) and 69-137 (KPPG…TYGM). Over residues 32–43 (FRPSSGNDQSEA) the composition is skewed to polar residues. The span at 70-87 (PPGYQGSSAPASPAGSTP) shows a compositional bias: low complexity. The residue at position 81 (serine 81) is a Phosphoserine. Positions 88–97 (PLSPFSPPLS) are enriched in pro residues. Positions 104 to 118 (EPFRFRRRSTSDAFE) are enriched in basic and acidic residues. The span at 127–137 (GPRSSPPTYGM) shows a compositional bias: polar residues.

Belongs to the DRM1/ARP family.

The protein is Dormancy-associated protein homolog 3 of Arabidopsis thaliana (Mouse-ear cress).